The sequence spans 784 residues: MNPERSERIEIPVLPLRDVVVYPHMVIPLFVGREKSIRCLEAAMDHDKKIMLVAQKEASTDEPGVNDLFTVGTVASILQMLKLPDGTVKVLVEGLQRARISALSDNGEHFSAKAEYLESPTIDEREQEVLVRTAISQFEGYIKLNKKIPPEVLTSLNSIDDPARLADTIAAHMPLKLADKQSVLEMSDVNERLEYLMAMMESEIDLLQVEKRIRNRVKKQMEKSQREYYLNEQMKAIQKELGEMDDAPDENEALKRKIDAAKMPKEAKEKAEAELQKLKMMSPMSAEATVVRGYIDWMVQVPWNARSKVKKDLRQAQEILDTDHYGLERVKDRILEYLAVQSRVNKIKGPILCLVGPPGVGKTSLGQSIAKATGRKYVRMALGGVRDEAEIRGHRRTYIGSMPGKLIQKMAKVGVKNPLFLLDEIDKMSSDMRGDPASALLEVLDPEQNVAFSDHYLEVDYDLSDVMFVATSNSMNIPAPLLDRMEVIRLSGYTEDEKLNIAKRHLLPKQIERNALKKGELTVDDSAIIGIIRYYTREAGVRGLEREISKLCRKAVKQLLLDKSLKHIEINGDNLHDYLGVQRFDYGRADNENRVGQVTGLAWTEVGGDLLTIETACVPGKGKLTYTGSLGEVMQESIQAALTVVRARAEKLGINPDFYEKRDIHVHVPEGATPKDGPSAGIAMCTALVSCLTGNPVRADVAMTGEITLRGQVLPIGGLKEKLLAAHRGGIKTVLIPFENKRDLEEIPDNVIADLDIHPVKRIEEVLTLALQNEPSGMQVVTAK.

One can recognise a Lon N-terminal domain in the interval 11 to 204; sequence IPVLPLRDVV…YLMAMMESEI (194 aa). An ATP-binding site is contributed by 356-363; the sequence is GPPGVGKT. One can recognise a Lon proteolytic domain in the interval 592–773; it reads ENRVGQVTGL…EEVLTLALQN (182 aa). Active-site residues include Ser-679 and Lys-722.

It belongs to the peptidase S16 family. As to quaternary structure, homohexamer. Organized in a ring with a central cavity. ATP binding and hydrolysis do not affect the oligomeric state of the enzyme.

It localises to the cytoplasm. It catalyses the reaction Hydrolysis of proteins in presence of ATP.. Its activity is regulated as follows. Contains an allosteric site (distinct from its active site), whose occupancy by an unfolded polypeptide leads to enzyme activation. Functionally, ATP-dependent serine protease that mediates the selective degradation of mutant and abnormal proteins as well as certain short-lived regulatory proteins. Required for cellular homeostasis and for survival from DNA damage and developmental changes induced by stress. Degrades polypeptides processively to yield small peptide fragments that are 5 to 10 amino acids long. Binds to DNA in a double-stranded, site-specific manner. Endogenous substrates include the regulatory proteins RcsA and SulA, the transcriptional activator SoxS, and UmuD. Its overproduction specifically inhibits translation through at least two different pathways, one of them being the YoeB-YefM toxin-antitoxin system. The sequence is that of Lon protease from Escherichia coli O6:H1 (strain CFT073 / ATCC 700928 / UPEC).